The chain runs to 432 residues: tRNA modification GTPase MnmE (432 aa).

Residues Arg-23, Glu-85, and Lys-124 each coordinate (6S)-5-formyl-5,6,7,8-tetrahydrofolate. Positions Gly-217–Leu-362 constitute a TrmE-type G domain. Asn-227 lines the K(+) pocket. GTP-binding positions include Asn-227–Ser-232, Ser-246–Thr-252, and Asp-271–Gly-274. Ser-231 lines the Mg(2+) pocket. Ser-246, Ile-248, and Thr-251 together coordinate K(+). Thr-252 lines the Mg(2+) pocket. (6S)-5-formyl-5,6,7,8-tetrahydrofolate is bound at residue Lys-432.

This sequence belongs to the TRAFAC class TrmE-Era-EngA-EngB-Septin-like GTPase superfamily. TrmE GTPase family. In terms of assembly, homodimer. Heterotetramer of two MnmE and two MnmG subunits. Requires K(+) as cofactor.

It is found in the cytoplasm. Functionally, exhibits a very high intrinsic GTPase hydrolysis rate. Involved in the addition of a carboxymethylaminomethyl (cmnm) group at the wobble position (U34) of certain tRNAs, forming tRNA-cmnm(5)s(2)U34. The chain is tRNA modification GTPase MnmE from Thermus thermophilus (strain ATCC 27634 / DSM 579 / HB8).